A 69-amino-acid polypeptide reads, in one-letter code: U-Asilidin(12)-Dg3a (69 aa).

The signal sequence occupies residues 1–19 (MRFLNIFLFFAAIIAFATA). A propeptide spanning residues 20 to 33 (SQVFEEDEIDMEPR) is cleaved from the precursor. 3 disulfides stabilise this stretch: cysteine 36-cysteine 59, cysteine 45-cysteine 65, and cysteine 49-cysteine 67.

It belongs to the asilidin-12 family. Expressed by the venom gland.

It localises to the secreted. Its function is as follows. Moderately increases Kv11.1/KCNH2/ERG1 currents and shifts the voltage-dependence of the channel activation to hyperpolarised potentials. In vivo, induces neurotoxic effects when injected into insects (tested on L.cuprina and A.domesticus). The polypeptide is U-Asilidin(12)-Dg3a (Dolopus genitalis (Giant Australian assassin fly)).